We begin with the raw amino-acid sequence, 238 residues long: ATP synthase subunit a (238 aa).

6 helical membrane-spanning segments follow: residues 18–38 (TTNLISGLVSALIVFCVVFAL), 76–96 (FGLYAFTLFLFIFVSNQIGLF), 114–134 (PIVTLTLSLITMMLAHYSGVA), 150–170 (FKVWLPIGVFTEFIDFLTLGL), 188–208 (GIAFSGGIVNMIVAIPLALIW), and 211–231 (FSVFLGSIQAFVFVTLTSVYI).

The protein belongs to the ATPase A chain family. As to quaternary structure, F-type ATPases have 2 components, CF(1) - the catalytic core - and CF(0) - the membrane proton channel. CF(1) has five subunits: alpha(3), beta(3), gamma(1), delta(1), epsilon(1). CF(0) has three main subunits: a(1), b(2) and c(9-12). The alpha and beta chains form an alternating ring which encloses part of the gamma chain. CF(1) is attached to CF(0) by a central stalk formed by the gamma and epsilon chains, while a peripheral stalk is formed by the delta and b chains.

It localises to the cell membrane. Key component of the proton channel; it plays a direct role in the translocation of protons across the membrane. This is ATP synthase subunit a from Pediococcus pentosaceus (strain ATCC 25745 / CCUG 21536 / LMG 10740 / 183-1w).